Reading from the N-terminus, the 202-residue chain is MKKIGVFGGTFDPIHIGHIYIAYEAYKILELDEVIFMPAGNPPHKKWKDITDEIIRYEMVKKAIEPYSFFSINNYEIEKKGLSFTYETLRYLHESFKEVELYFITGADCLINLNSWKNINEIFKFSNLVVFNRPGFDKNDLLKRKEEFDREYCTNIVYLDLLNIEISSTLIRERVHDSLEVKFFLPPGVVDIIDKYNLYRRE.

Belongs to the NadD family.

The catalysed reaction is nicotinate beta-D-ribonucleotide + ATP + H(+) = deamido-NAD(+) + diphosphate. It functions in the pathway cofactor biosynthesis; NAD(+) biosynthesis; deamido-NAD(+) from nicotinate D-ribonucleotide: step 1/1. Functionally, catalyzes the reversible adenylation of nicotinate mononucleotide (NaMN) to nicotinic acid adenine dinucleotide (NaAD). The chain is Probable nicotinate-nucleotide adenylyltransferase from Clostridium perfringens (strain ATCC 13124 / DSM 756 / JCM 1290 / NCIMB 6125 / NCTC 8237 / Type A).